A 384-amino-acid polypeptide reads, in one-letter code: MLSGLWSSILALLGVFLQSVGEFRAETQEQDVEIVQKYLKNYYNSDKRNSGLVVEILKQFFGLKVTGKPDAETLVMKQSTCGVPDVGEYVLTPGNPRWENTHLTYRIENYTPDLVSPLTFTKVSEGQADIMISFVRGDHRDKYPFDGPGGNLAHASQPGPGIGGDAHFDEYERWTKNFQDYNLYRVAAHELGHSLGLSHSTDIGALMYPTYLRGDVQLSQDDIDGPSGNPVQPRGPQTPQVCDSKLTFDAITTVRGELMFFKMRTNRFYPEVELGLQAAYEMADRDEVRFFKGNKYWAVSGQDVLYGYPKDIHSSFGFPTGVAHECWSYDEYKQSMDTGYADEFPGDAVFQKFFHGTRQYQFDLKTKRILTLQKANSWFNCRKN.

The first 25 residues, 1–25 (MLSGLWSSILALLGVFLQSVGEFRA), serve as a signal peptide directing secretion. A propeptide spans 26–88 (ETQEQDVEIV…STCGVPDVGE (63 aa)) (activation peptide). The short motif at 79–86 (STCGVPDV) is the Cysteine switch element. Position 81 (C81) interacts with Zn(2+). The Ca(2+) site is built by D113 and D129. Positions 139 and 141 each coordinate Zn(2+). D146, G147, G149, and N151 together coordinate Ca(2+). H154 provides a ligand contact to Zn(2+). Ca(2+) contacts are provided by G161, G163, and D165. Residue H167 coordinates Zn(2+). Ca(2+) is bound by residues D169, E170, and E172. Position 189 (H189) interacts with Zn(2+). Residue E190 is part of the active site. Zn(2+)-binding residues include H193 and H199. The tract at residues 218-239 (LSQDDIDGPSGNPVQPRGPQTP) is disordered. An intrachain disulfide couples C242 to C381. Ca(2+) is bound by residues D249, Q277, and D347. Hemopexin repeat units follow at residues 273–319 (ELGL…FGFP) and 333–381 (KQSM…WFNC).

Belongs to the peptidase M10A family. It depends on Ca(2+) as a cofactor. Requires Zn(2+) as cofactor.

The protein resides in the secreted. Its subcellular location is the extracellular space. It is found in the extracellular matrix. It carries out the reaction Cleavage of the triple helix of collagen at about three-quarters of the length of the molecule from the N-terminus, at 775-Gly-|-Ile-776 in the alpha1(I) chain. Cleaves synthetic substrates and alpha-macroglobulins at bonds where P1' is a hydrophobic residue.. With respect to regulation, can be activated without removal of the activation peptide. Cleaves collagens of types I, II, and III at one site in the helical domain. Also cleaves collagens of types VII and X. The polypeptide is Interstitial collagenase (Aquarana catesbeiana (American bullfrog)).